A 388-amino-acid polypeptide reads, in one-letter code: Mannitol-1-phosphate 5-dehydrogenase (388 aa).

Residue 5–16 (AVHFGGGNIGRG) coordinates NAD(+). Residue Lys213 is part of the active site.

This sequence belongs to the mannitol dehydrogenase family. As to quaternary structure, monomer.

The enzyme catalyses D-mannitol 1-phosphate + NAD(+) = beta-D-fructose 6-phosphate + NADH + H(+). Catalyzes the NAD(H)-dependent interconversion of D-fructose 6-phosphate and D-mannitol 1-phosphate in the mannitol metabolic pathway. This Penicillium rubens (strain ATCC 28089 / DSM 1075 / NRRL 1951 / Wisconsin 54-1255) (Penicillium chrysogenum) protein is Mannitol-1-phosphate 5-dehydrogenase.